The primary structure comprises 83 residues: Cell division topological specificity factor (83 aa).

The protein belongs to the MinE family.

In terms of biological role, prevents the cell division inhibition by proteins MinC and MinD at internal division sites while permitting inhibition at polar sites. This ensures cell division at the proper site by restricting the formation of a division septum at the midpoint of the long axis of the cell. The sequence is that of Cell division topological specificity factor from Buchnera aphidicola subsp. Baizongia pistaciae (strain Bp).